Here is a 310-residue protein sequence, read N- to C-terminus: Putative F-box protein PP2-B2 (310 aa).

The interval methionine 1–glutamate 34 is disordered. Residues proline 44–phenylalanine 90 enclose the F-box domain.

This Arabidopsis thaliana (Mouse-ear cress) protein is Putative F-box protein PP2-B2 (PP2B2).